A 317-amino-acid chain; its full sequence is Petrobactin-binding protein YclQ (317 aa).

The N-terminal stretch at Met1–Ala19 is a signal peptide. Cys20 carries N-palmitoyl cysteine lipidation. A lipid anchor (S-diacylglycerol cysteine) is attached at Cys20. A Fe/B12 periplasmic-binding domain is found at Lys56–Lys317.

It belongs to the bacterial solute-binding protein 8 family. As to quaternary structure, the complex is composed of two ATP-binding proteins (YclP), two transmembrane proteins (YclN and YclO) and a solute-binding protein (YclQ). Interacts with FloT.

The protein resides in the cell membrane. It is found in the membrane raft. Part of the ABC transporter complex YclNOPQ involved in uptake of ferric-petrobactin. Petrobactin is a photoreactive 3,4-catecholate siderophore produced by many members of the B.cereus group, including B.anthracis. Binds selectively iron-free and ferric petrobactin and the petrobactin precursor 3,4-dihydroxybenzoic acid (3,4-DHB). This chain is Petrobactin-binding protein YclQ (yclQ), found in Bacillus subtilis (strain 168).